The sequence spans 329 residues: Isopenicillin N synthase (329 aa).

Isopenicillin N-binding residues include Arg-87, Tyr-91, and Tyr-189. Positions 87, 91, 189, 212, and 214 each coordinate N-[(5S)-5-amino-5-carboxypentanoyl]-L-cysteinyl-D-valine. Residues 180–286 (TLSAVTLIHY…RLSLPFFLHA (107 aa)) form the Fe2OG dioxygenase domain. 3 residues coordinate Fe(2+): His-212, Asp-214, and His-268. Arg-277 lines the 2-oxoglutarate pocket. Residue Ser-279 participates in isopenicillin N binding. Ser-279 contacts N-[(5S)-5-amino-5-carboxypentanoyl]-L-cysteinyl-D-valine.

This sequence belongs to the iron/ascorbate-dependent oxidoreductase family. Fe cation serves as cofactor. L-ascorbate is required as a cofactor.

The enzyme catalyses N-[(5S)-5-amino-5-carboxypentanoyl]-L-cysteinyl-D-valine + O2 = isopenicillin N + 2 H2O. It participates in antibiotic biosynthesis; penicillin G biosynthesis; penicillin G from L-alpha-aminoadipate and L-cysteine and L-valine: step 2/3. Functionally, removes, in the presence of oxygen, 4 hydrogen atoms from delta-L-(alpha-aminoadipyl)-L-cysteinyl-D-valine (ACV) to form the azetidinone and thiazolidine rings of isopenicillin. The chain is Isopenicillin N synthase (pcbC) from Streptomyces griseus.